Reading from the N-terminus, the 121-residue chain is Large ribosomal subunit protein uL14c (121 aa).

The protein belongs to the universal ribosomal protein uL14 family. As to quaternary structure, part of the 50S ribosomal subunit.

The protein localises to the plastid. The protein resides in the chloroplast. Functionally, binds to 23S rRNA. The protein is Large ribosomal subunit protein uL14c of Emiliania huxleyi (Coccolithophore).